We begin with the raw amino-acid sequence, 122 residues long: Holo-[acyl-carrier-protein] synthase (122 aa).

Mg(2+)-binding residues include aspartate 8 and glutamate 60.

The protein belongs to the P-Pant transferase superfamily. AcpS family. It depends on Mg(2+) as a cofactor.

Its subcellular location is the cytoplasm. The catalysed reaction is apo-[ACP] + CoA = holo-[ACP] + adenosine 3',5'-bisphosphate + H(+). Functionally, transfers the 4'-phosphopantetheine moiety from coenzyme A to a Ser of acyl-carrier-protein. This chain is Holo-[acyl-carrier-protein] synthase, found in Anaplasma phagocytophilum (strain HZ).